The primary structure comprises 839 residues: ABC transporter A family member 7 (839 aa).

The next 7 membrane-spanning stretches (helical) occupy residues 30–50, 238–258, 286–306, 321–341, 352–372, 378–398, and 419–439; these read GVQI…KLWI, IASL…LPLF, IMTF…ISLI, FALF…AFFL, SIFG…LSLF, VFYY…LCGL, and ILFW…YLDK. Residues 525-756 enclose the ABC transporter domain; the sequence is LIVQGLRKQF…FGDGYSVRID (232 aa). 559–566 serves as a coordination point for ATP; that stretch reads GPNGAGKT.

This sequence belongs to the ABC transporter superfamily. ABCA family.

The protein resides in the membrane. The chain is ABC transporter A family member 7 (abcA7) from Dictyostelium discoideum (Social amoeba).